The sequence spans 313 residues: MGFLGYIYNCIRIHVSLAPIVEWRPAQAGRQYRRFPMKIKALVVLFNGALLLLCMGTGYVLFLTPVRGTGWQSVRAYGIFFLIFLLLFLLINTLYVKNRRLLRYLDAEDWSALAALLEEEVFTRNRVALRRVSLLSESLILLSDFEALERLEHFVHAQRPRYIMKCALTFAVGKLLAGKYSELRTFMTRVAATQAPVQPWTRFYLAFACHLCGDFEQAHAHLLTLVHTKRQPLIRVLSAYLLSEVLPEKLRRAPAHDAQLIARGCAHAAQVRADVHAHYTPRRWADYENRKKQNVDVLVFLKLMQDARAWLFP.

The next 2 helical transmembrane spans lie at 42 to 64 and 74 to 96; these read LVVL…LFLT and VRAY…TLYV.

The protein resides in the cell membrane. This is an uncharacterized protein from Treponema pallidum (strain Nichols).